A 317-amino-acid chain; its full sequence is Melanocyte-stimulating hormone receptor (317 aa).

The Extracellular segment spans residues 1-37 (MPVLGSQRRLLGSLNCTPPATFPLMLAPNRTGPQCLE). The N-linked (GlcNAc...) asparagine glycan is linked to Asn-29. A helical transmembrane segment spans residues 38-63 (VSIPNGLFLSLGLVSLVENVLVVAAI). The Cytoplasmic portion of the chain corresponds to 64–72 (AKNSNLHSP). The helical transmembrane segment at 73 to 93 (MYYFICCLAVSDLLVSVSNVL) threads the bilayer. Topologically, residues 94–118 (ETAVMLLLEAGALAARAAVVQQLDN) are extracellular. The chain crosses the membrane as a helical span at residues 119–140 (VIDVLICGSMVSSLCFLGAIAV). The Cytoplasmic segment spans residues 141 to 163 (DRYISIFYALRYHSVVTLPRAWR). A helical membrane pass occupies residues 164 to 183 (IIAAIWVASILTSLLFITYY). Residues 184–191 (NHTVVLLC) are Extracellular-facing. A helical membrane pass occupies residues 192–211 (LVGFFIAMLALMAVLYVHML). Residues 212–240 (ARACQHARGIARLQKRQRPIHRGFGLKGA) are Cytoplasmic-facing. Residues 241 to 266 (ATLTILLGVFFLCWGPFFLHLSLIVL) form a helical membrane-spanning segment. The Extracellular segment spans residues 267–279 (CPQHPTCGCIFKN). A helical transmembrane segment spans residues 280–300 (FNLFLALIICNAIVDPLIYAF). The Cytoplasmic segment spans residues 301 to 317 (RSQELRKTLQEVLQCSW). The S-palmitoyl cysteine moiety is linked to residue Cys-315.

Belongs to the G-protein coupled receptor 1 family. As to quaternary structure, interacts with MGRN1, but does not undergo MGRN1-mediated ubiquitination; this interaction competes with GNAS-binding and thus inhibits agonist-induced cAMP production. Interacts with OPN3; the interaction results in a decrease in MC1R-mediated cAMP signaling and ultimately a decrease in melanin production in melanocytes.

It localises to the cell membrane. Receptor for MSH (alpha, beta and gamma) and ACTH. The activity of this receptor is mediated by G proteins which activate adenylate cyclase. Mediates melanogenesis, the production of eumelanin (black/brown) and phaeomelanin (red/yellow), via regulation of cAMP signaling in melanocytes. The polypeptide is Melanocyte-stimulating hormone receptor (MC1R) (Rangifer tarandus (Reindeer)).